The chain runs to 87 residues: Transcriptional regulator PINT87aa (87 aa).

Interacts with PAF1 complex member PAF1. Interacts with transcription factor FOXM1. Expressed in brain, liver, kidney and stomach with lower levels in breast, intestine, thyroid and pancreas.

It localises to the nucleus. Its function is as follows. Enhances the binding of the PAF1 complex to target gene promoters and plays a role in negative regulation of transcription. May function as an anchor to keep the PAF1 complex on target gene promoters, sequentially pausing RNA polymerase II-induced mRNA elongation. Inhibits FOXM1-mediated transcription of PHB2. This is Transcriptional regulator PINT87aa from Homo sapiens (Human).